Consider the following 143-residue polypeptide: Mannitol-specific phosphotransferase enzyme IIA component (143 aa).

A PTS EIIA type-2 domain is found at 1-142; the sequence is MKLLKNNIYI…DKVLEFLAKH (142 aa). The active-site Tele-phosphohistidine intermediate is the His-61. Residue His-61 is modified to Phosphohistidine; by HPr.

The protein localises to the cytoplasm. Functionally, the phosphoenolpyruvate-dependent sugar phosphotransferase system (sugar PTS), a major carbohydrate active transport system, catalyzes the phosphorylation of incoming sugar substrates concomitantly with their translocation across the cell membrane. The enzyme II CmtAB PTS system is involved in D-mannitol transport. The protein is Mannitol-specific phosphotransferase enzyme IIA component (mtlF) of Mycoplasma pneumoniae (strain ATCC 29342 / M129 / Subtype 1) (Mycoplasmoides pneumoniae).